The following is a 222-amino-acid chain: Sperm acrosome-associated protein 9 (222 aa).

Residues 164–222 (QHVSEPQAHQESTRGAARPAQAIGTQPRATKHKCRQLTKASLKPRGCSKPPWRPPGGKL) are disordered.

In terms of assembly, microtubule inner protein component of sperm flagellar doublet microtubules. Interacts with CABP1 and CALR. Interacts with INCA1. Interacts with microtubules.

The protein resides in the cytoplasm. It localises to the cytoplasmic vesicle. The protein localises to the secretory vesicle. It is found in the acrosome. Its subcellular location is the cytoskeleton. The protein resides in the cilium basal body. It localises to the flagellum axoneme. The protein localises to the cilium axoneme. It is found in the nucleus. Functionally, microtubule inner protein (MIP) part of the dynein-decorated doublet microtubules (DMTs) of multiciliated respiratory cells and the distal singlet microtubules of monoflagellated spermatozoa. Forms an extensive interaction network cross-linking the lumen of axonemal doublet microtubules. In Homo sapiens (Human), this protein is Sperm acrosome-associated protein 9.